A 59-amino-acid chain; its full sequence is UPF0181 protein YoaH (59 aa).

Belongs to the UPF0181 family.

This is UPF0181 protein YoaH from Shigella flexneri.